The sequence spans 441 residues: Tol-Pal system protein TolB (441 aa).

The N-terminal stretch at 1-39 is a signal peptide; the sequence is MPTMTPAFSRASLSEALRSYGLALLLFLATLLAWQPAHA.

It belongs to the TolB family. The Tol-Pal system is composed of five core proteins: the inner membrane proteins TolA, TolQ and TolR, the periplasmic protein TolB and the outer membrane protein Pal. They form a network linking the inner and outer membranes and the peptidoglycan layer.

It localises to the periplasm. In terms of biological role, part of the Tol-Pal system, which plays a role in outer membrane invagination during cell division and is important for maintaining outer membrane integrity. This chain is Tol-Pal system protein TolB, found in Bordetella avium (strain 197N).